Consider the following 938-residue polypeptide: Probable glutamyl endopeptidase, chloroplastic (938 aa).

Residues M1–V54 constitute a chloroplast transit peptide. Low complexity predominate over residues G58 to G76. The interval G58–L77 is disordered. Active-site charge relay system residues include S762, D836, and H870. Over residues S897–V913 the composition is skewed to polar residues. The interval S897–L938 is disordered.

It belongs to the peptidase S9D family.

The protein resides in the plastid. Its subcellular location is the chloroplast stroma. Functionally, serine-type protease active in vitro against the LHCII N-terminal. Cleaves its substrate on the carboxy-side of Glu residues. The polypeptide is Probable glutamyl endopeptidase, chloroplastic (GEP) (Oryza sativa subsp. japonica (Rice)).